Here is a 379-residue protein sequence, read N- to C-terminus: uncharacterized protein (379 aa).

The chain crosses the membrane as a helical span at residues 7 to 27 (VYIFAGIFLFIALIILIKIFF).

The protein localises to the membrane. This is an uncharacterized protein from Caenorhabditis elegans.